We begin with the raw amino-acid sequence, 523 residues long: Nuclear receptor ROR-alpha (523 aa).

A compositionally biased stretch (low complexity) spans 1-26 (MESAPAAPDPAASEPGSSGSEAAAGS). The disordered stretch occupies residues 1–63 (MESAPAAPDP…SRGISVTKKT (63 aa)). The residue at position 38 (Lys-38) is an N6-methyllysine. 2 NR C4-type zinc fingers span residues 73–93 (CKICGDKSSGIHYGVITCEGC) and 109–133 (CPRQKNCLIDRTSRNRCQHCRLQKC). Residues 73-138 (CKICGDKSSG…RLQKCLAVGM (66 aa)) constitute a DNA-binding region (nuclear receptor). The interval 154 to 183 (DSLYAEVQKHRMQQQQRDHQQQPGEAEPLT) is disordered. Thr-183 carries the post-translational modification Phosphothreonine; by MAPK1. A Glycyl lysine isopeptide (Lys-Gly) (interchain with G-Cter in SUMO) cross-link involves residue Lys-240. The NR LBD domain maps to 272–510 (ELEHLAQNIS…LHFPPLYKEL (239 aa)). The AF-2 signature appears at 506–511 (LYKELF).

This sequence belongs to the nuclear hormone receptor family. NR1 subfamily. Monomer. Interacts (via the DNA-binding domain) with HIF1A; the interaction enhances HIF1A transcription under hypoxia through increasing protein stability. Interacts with CEBPB; the interaction disrupts the interaction CEBPB:EP300. Interacts with the coactivators NCOA2, PPARGC1A (via LXXLL motif), EP300 and MED1. Interacts with the corepressor NCOR1. Interacts with MAGED1 and CTNNB1. Interacts with CRY1 and PER2. Interacts (via AF-2 motif) with PROX1. Interacts with NRIP1. Isoform 4 interacts (via AF-2 motif) with isoform 1 of FOXP3 (via LXXLL motif). In terms of processing, phosphorylation by conventional PKCs in neurons inhibits transcriptional activity. Phosphorylated on Thr-183 by MAPK1/ERK1 in vitro. Post-translationally, sumoylated by SENP1 and SENP2. Sumoylation, promoted by PIAS2, PIAS3, PIAS4 but not PIAS1, enhances the transcriptional activity. Desumoylated by SENP1. Ubiquitinated, leading to its degradation by the proteasome. Proteasomal degradation is required for efficient transcriptional activity and is prevented by HR. In terms of processing, monomethylated at Lys-38 by EZH2, this creates a degron recognized by a DCX (DDB1-DCAF1/VPRBP-CUL4A-RBX1) E3 ubiquitin ligase complex. Expressed in cerebellum, heart, liver, lung, kidney, retina and brown and white adipose tissues. Expressed in the subset of mature Th17 cells.

Its subcellular location is the nucleus. Nuclear receptor that binds DNA as a monomer to ROR response elements (RORE) containing a single core motif half-site 5'-AGGTCA-3' preceded by a short A-T-rich sequence. Key regulator of embryonic development, cellular differentiation, immunity, circadian rhythm as well as lipid, steroid, xenobiotics and glucose metabolism. Considered to have intrinsic transcriptional activity, have some natural ligands like oxysterols that act as agonists (25-hydroxycholesterol) or inverse agonists (7-oxygenated sterols), enhancing or repressing the transcriptional activity, respectively. Recruits distinct combinations of cofactors to target genes regulatory regions to modulate their transcriptional expression, depending on the tissue, time and promoter contexts. Regulates genes involved in photoreceptor development including OPN1SW, OPN1SM and ARR3 and skeletal muscle development with MYOD1. Required for proper cerebellum development, regulates SHH gene expression, among others, to induce granule cells proliferation as well as expression of genes involved in calcium-mediated signal transduction. Regulates the circadian expression of several clock genes, including CLOCK, BMAL1, NPAS2 and CRY1. Competes with NR1D1 for binding to their shared DNA response element on some clock genes such as BMAL1, CRY1 and NR1D1 itself, resulting in NR1D1-mediated repression or RORA-mediated activation of clock genes expression, leading to the circadian pattern of clock genes expression. Therefore influences the period length and stability of the clock. Regulates genes involved in lipid metabolism such as apolipoproteins APOA1, APOA5, APOC3 and PPARG. In liver, has specific and redundant functions with RORC as positive or negative modulator of expression of genes encoding phase I and phase II proteins involved in the metabolism of lipids, steroids and xenobiotics, such as CYP7B1 and SULT2A1. Induces a rhythmic expression of some of these genes. In addition, interplays functionally with NR1H2 and NR1H3 for the regulation of genes involved in cholesterol metabolism. Also involved in the regulation of hepatic glucose metabolism through the modulation of G6PC1 and PCK1. In adipose tissue, plays a role as negative regulator of adipocyte differentiation, probably acting through dual mechanisms. May suppress CEBPB-dependent adipogenesis through direct interaction and PPARG-dependent adipogenesis through competition for DNA-binding. Downstream of IL6 and TGFB and synergistically with RORC isoform 2, is implicated in the lineage specification of uncommitted CD4(+) T-helper (T(H)) cells into T(H)17 cells, antagonizing the T(H)1 program. Probably regulates IL17 and IL17F expression on T(H) by binding to the essential enhancer conserved non-coding sequence 2 (CNS2) in the IL17-IL17F locus. Involved in hypoxia signaling by interacting with and activating the transcriptional activity of HIF1A. May inhibit cell growth in response to cellular stress. May exert an anti-inflammatory role by inducing CHUK expression and inhibiting NF-kappa-B signaling. In Mus musculus (Mouse), this protein is Nuclear receptor ROR-alpha (Rora).